The primary structure comprises 924 residues: DNA repair and recombination protein RDH54 (924 aa).

Over residues 1 to 10 (MQIPKYENKP) the composition is skewed to basic and acidic residues. Disordered regions lie at residues 1–21 (MQIP…GSNK) and 155–183 (EALS…NDGG). Residues 168–178 (TTSTTETVPST) are compositionally biased toward low complexity. Positions 299–487 (LENDSDISGC…FTIIDFINPG (189 aa)) constitute a Helicase ATP-binding domain. 346-353 (IPLTGLCK) contributes to the ATP binding site. A DEGH box motif is present at residues 472–475 (NDLN). Residue Lys-615 forms a Glycyl lysine isopeptide (Lys-Gly) (interchain with G-Cter in ubiquitin) linkage. In terms of domain architecture, Helicase C-terminal spans 631–790 (KLRVLMTLLE…DSEMRNKESS (160 aa)).

It belongs to the SNF2/RAD54 helicase family. As to quaternary structure, interacts with RAD51 and DMC1.

The protein resides in the nucleus. The enzyme catalyses ATP + H2O = ADP + phosphate + H(+). In terms of biological role, involved in the recombinational repair of double-strand breaks (DSB) in DNA during mitosis and meiosis. Has DNA dependent ATPase activity. Promotes D-loop (displacement loop) formation with RAD51 recombinase. Modifies the topology of double-stranded DNA during the D-loop reaction to facilitate the invasion of the homologous duplex molecule by the initiating single-stranded DNA substrate. Required for adaptation from G2/M checkpoint arrest induced by a double strand break, by participating in monitoring the extent of single-stranded DNA produced by resection of DNA ends. This role is distinct from its roles in recombination. Promotes colocalization of RAD51 and DMC1 during meiotic recombination. Involved in crossover interference. In Saccharomyces cerevisiae (strain YJM789) (Baker's yeast), this protein is DNA repair and recombination protein RDH54 (RDH54).